Reading from the N-terminus, the 783-residue chain is Flavin carrier protein 2 (783 aa).

The first 22 residues, 1 to 22, serve as a signal peptide directing secretion; sequence MIFLNTFARCLLTCFVLCSGTA. The Lumenal portion of the chain corresponds to 23 to 182; that stretch reads RSSDTNDTTP…NGKTVQTKYA (160 aa). N-linked (GlcNAc...) asparagine glycosylation is found at N28, N65, N81, and N156. The chain crosses the membrane as a helical span at residues 183–203; that stretch reads AWPIAAISGVGVLTSGFVSVI. The Cytoplasmic segment spans residues 204–211; the sequence is GYSATAAH. A helical transmembrane segment spans residues 212 to 232; sequence IASNSISLFIYFQNLAITAMM. Residues 233–347 are Lumenal-facing; it reads GVSRVPPIAA…AYLANIELSN (115 aa). Residue N323 is glycosylated (N-linked (GlcNAc...) asparagine). A helical transmembrane segment spans residues 348–368; that stretch reads FFLTGIVFFLFFLFVVVVSLI. Topologically, residues 369 to 402 are cytoplasmic; it reads FFKALLEVLTRARILKETSNFFQYRKNWGSIIKG. A helical membrane pass occupies residues 403–423; that stretch reads TLFRLSIIAFPQVSLLAIWEF. The Lumenal segment spans residues 424–430; the sequence is TQVNSPA. The chain crosses the membrane as a helical span at residues 431 to 451; the sequence is IVVDAVVILLIITGLLVYGTI. Residues 452 to 492 are Cytoplasmic-facing; the sequence is RVFIKGRESLRLYKNPAYLLYSDTYFLNKFGFLYVQFKADK. Residues 493–513 form a helical membrane-spanning segment; sequence FWWLLPLLSYAFLRSLFVAVL. At 514–521 the chain is on the lumenal side; it reads QNQGKAQA. The chain crosses the membrane as a helical span at residues 522–542; it reads MIIFVIELAYFVCLCWIRPYL. Residues 543 to 547 are Cytoplasmic-facing; it reads DKRTN. A helical transmembrane segment spans residues 548-568; it reads VFNIAIHLVNLINAFFFLFFS. Residues 569-581 are Lumenal-facing; the sequence is NLFKQPAVVSSVM. Residues 582-602 form a helical membrane-spanning segment; that stretch reads AVILFVLNAVFALFLLLFTIV. At 603–783 the chain is on the cytoplasmic side; the sequence is TCTLALLHRN…ENARNNNPYL (181 aa). The disordered stretch occupies residues 681-783; the sequence is RLFDDETSSS…ENARNNNPYL (103 aa). The span at 688–697 shows a compositional bias: low complexity; it reads SSSSFKQNSS. 2 stretches are compositionally biased toward polar residues: residues 704 to 748 and 756 to 767; these read VTEQ…TSSL and YLGNSNKSYSHF. Positions 768 to 783 are enriched in low complexity; sequence NNNGSNENARNNNPYL.

Belongs to the transient receptor potential (TRP) ion channel family.

Its subcellular location is the endoplasmic reticulum membrane. In terms of biological role, may be responsible for the transport of FAD into the endoplasmic reticulum lumen, where it is required for oxidative protein folding. This chain is Flavin carrier protein 2 (FLC2), found in Saccharomyces cerevisiae (strain ATCC 204508 / S288c) (Baker's yeast).